The chain runs to 658 residues: Glycogen debranching enzyme (658 aa).

The active-site Nucleophile is aspartate 336. The active-site Proton donor is glutamate 371. A disordered region spans residues 459–486 (EANGEENRDGTNSNYSDNNGKEGLGGPL).

The protein belongs to the glycosyl hydrolase 13 family.

The catalysed reaction is Hydrolysis of (1-&gt;6)-alpha-D-glucosidic linkages to branches with degrees of polymerization of three or four glucose residues in limit dextrin.. The protein operates within glycan degradation; glycogen degradation. In terms of biological role, removes maltotriose and maltotetraose chains that are attached by 1,6-alpha-linkage to the limit dextrin main chain, generating a debranched limit dextrin. The protein is Glycogen debranching enzyme of Salmonella gallinarum (strain 287/91 / NCTC 13346).